The sequence spans 202 residues: Lymphotoxin-alpha (202 aa).

The N-terminal stretch at 1–33 (MTPLGRLHLLRVLSTPPVFLLGLLLALPLGAQG) is a signal peptide. The 143-residue stretch at 60-202 (PAAHLVGYPS…STVFFGAFAL (143 aa)) folds into the THD domain. The N-linked (GlcNAc...) asparagine glycan is linked to Asn-93.

Belongs to the tumor necrosis factor family. In terms of assembly, homotrimer, and heterotrimer of either two LTB and one LTA subunits or (less prevalent) two LTA and one LTB subunits. Interacts with TNFRSF14.

The protein localises to the secreted. Its subcellular location is the membrane. Functionally, cytokine that in its homotrimeric form binds to TNFRSF1A/TNFR1, TNFRSF1B/TNFBR and TNFRSF14/HVEM. In its heterotrimeric form with LTB binds to TNFRSF3/LTBR. Lymphotoxin is produced by lymphocytes and is cytotoxic for a wide range of tumor cells in vitro and in vivo. The protein is Lymphotoxin-alpha (Lta) of Rattus norvegicus (Rat).